The sequence spans 220 residues: Large ribosomal subunit protein uL3 (220 aa).

The interval 61–81 (KGSKSNKYANKPAEGHAKKAD) is disordered.

Belongs to the universal ribosomal protein uL3 family. Part of the 50S ribosomal subunit. Forms a cluster with proteins L14 and L19.

In terms of biological role, one of the primary rRNA binding proteins, it binds directly near the 3'-end of the 23S rRNA, where it nucleates assembly of the 50S subunit. The polypeptide is Large ribosomal subunit protein uL3 (Staphylococcus epidermidis (strain ATCC 35984 / DSM 28319 / BCRC 17069 / CCUG 31568 / BM 3577 / RP62A)).